We begin with the raw amino-acid sequence, 850 residues long: Pro-neuregulin-2, membrane-bound isoform (850 aa).

Positions Met1 to Asp96 are disordered. The propeptide occupies Met1–Ala111. Residues Ser20–Pro59 are compositionally biased toward low complexity. Asn52 and Asn53 each carry an N-linked (GlcNAc...) asparagine glycan. Pro residues predominate over residues Ala60–Arg74. Residues Ser75–Gly92 show a composition bias toward low complexity. Over Cys112–Arg405 the chain is Extracellular. N-linked (GlcNAc...) asparagine glycans are attached at residues Asn147, Asn278, and Asn346. Positions Pro237–Ser332 constitute an Ig-like C2-type domain. 4 disulfides stabilise this stretch: Cys257/Cys311, Cys345/Cys359, Cys353/Cys370, and Cys372/Cys381. The 42-residue stretch at His341–Leu382 folds into the EGF-like domain. Residues Val406–Ala426 traverse the membrane as a helical segment. Residues Tyr427 to Leu850 lie on the Cytoplasmic side of the membrane. Disordered stretches follow at residues Thr492–Ser535, Glu566–Asp585, Leu647–Ala681, Leu700–Leu788, and Ala801–Leu850. Residues Ser494–Ser506 show a composition bias toward low complexity. Residues His514 to Glu527 show a composition bias toward basic and acidic residues. The span at Pro651–Gly665 shows a compositional bias: pro residues. The segment covering Gly750 to Ser767 has biased composition (low complexity).

This sequence belongs to the neuregulin family. As to quaternary structure, interacts with ERBB3 and ERBB4. In terms of processing, proteolytic cleavage close to the plasma membrane on the external face leads to the release of the soluble growth factor form. Post-translationally, extensive glycosylation precedes the proteolytic cleavage. In terms of tissue distribution, restricted to the cerebellum in the adult.

It is found in the cell membrane. It localises to the secreted. Its function is as follows. Direct ligand for ERBB3 and ERBB4 tyrosine kinase receptors. Concomitantly recruits ERBB1 and ERBB2 coreceptors, resulting in ligand-stimulated tyrosine phosphorylation and activation of the ERBB receptors. May also promote the heterodimerization with the EGF receptor. The chain is Pro-neuregulin-2, membrane-bound isoform (NRG2) from Homo sapiens (Human).